The sequence spans 244 residues: Histone H1, orphon (244 aa).

Over residues 1–21 (MSDPAPEIEAPVEAAPVASPP) the composition is skewed to low complexity. 2 disordered regions span residues 1 to 59 (MSDP…PVSE) and 113 to 244 (QAKG…KKAK). A compositionally biased stretch (basic and acidic residues) spans 35 to 45 (PKAEKPKSDKP). Positions 53–127 (THPPVSEMVV…GASGSFKLPP (75 aa)) constitute an H15 domain. The span at 186–203 (AKPASKKAAAPKPKAAKP) shows a compositional bias: low complexity. A compositionally biased stretch (basic residues) spans 213 to 244 (ATKAAAKKPVAKPVAKKPAAKPAKKPAAKKAK).

Belongs to the histone H1/H5 family.

The protein localises to the nucleus. Its subcellular location is the chromosome. In terms of biological role, histones H1 are necessary for the condensation of nucleosome chains into higher-order structures. This Chironomus thummi thummi (Midge) protein is Histone H1, orphon.